A 51-amino-acid chain; its full sequence is Large ribosomal subunit protein eL39 (51 aa).

This sequence belongs to the eukaryotic ribosomal protein eL39 family.

The sequence is that of Large ribosomal subunit protein eL39 from Methanosarcina barkeri (strain Fusaro / DSM 804).